Reading from the N-terminus, the 267-residue chain is Acyl-[acyl-carrier-protein]--UDP-N-acetylglucosamine O-acyltransferase (267 aa).

It belongs to the transferase hexapeptide repeat family. LpxA subfamily. In terms of assembly, homotrimer.

It is found in the cytoplasm. The catalysed reaction is a (3R)-hydroxyacyl-[ACP] + UDP-N-acetyl-alpha-D-glucosamine = a UDP-3-O-[(3R)-3-hydroxyacyl]-N-acetyl-alpha-D-glucosamine + holo-[ACP]. The protein operates within glycolipid biosynthesis; lipid IV(A) biosynthesis; lipid IV(A) from (3R)-3-hydroxytetradecanoyl-[acyl-carrier-protein] and UDP-N-acetyl-alpha-D-glucosamine: step 1/6. Its function is as follows. Involved in the biosynthesis of lipid A, a phosphorylated glycolipid that anchors the lipopolysaccharide to the outer membrane of the cell. The polypeptide is Acyl-[acyl-carrier-protein]--UDP-N-acetylglucosamine O-acyltransferase (Cupriavidus taiwanensis (strain DSM 17343 / BCRC 17206 / CCUG 44338 / CIP 107171 / LMG 19424 / R1) (Ralstonia taiwanensis (strain LMG 19424))).